Here is a 112-residue protein sequence, read N- to C-terminus: Cytochrome c2 (112 aa).

Heme c contacts are provided by Cys14, Cys17, His18, and Met91.

Belongs to the cytochrome c family. Post-translationally, binds 1 heme c group covalently per subunit.

In terms of biological role, cytochrome c2 is found mainly in purple, non-sulfur, photosynthetic bacteria where it functions as the electron donor to the oxidized bacteriochlorophyll in the photophosphorylation pathway. However, it may also have a role in the respiratory chain and is found in some non-photosynthetic bacteria. The polypeptide is Cytochrome c2 (cycA) (Rhodospirillum rubrum).